Consider the following 1445-residue polypeptide: Tensin-3 (1445 aa).

The region spanning 1–170 (MEEGHGLDLT…QFLSGLLSGS (170 aa)) is the Phosphatase tensin-type domain. The C2 tensin-type domain occupies 175 to 301 (ASPLFLHFVI…GKVELVFSAT (127 aa)). At threonine 323 the chain carries Phosphothreonine. Phosphoserine occurs at positions 332 and 361. Residues 358–421 (RKKSSSDPGI…GTRRGLSAQE (64 aa)) are disordered. Over residues 386-400 (TLSVSSDSGHSTASA) the composition is skewed to polar residues. Phosphoserine occurs at positions 440 and 516. The segment at 538–568 (VPDLGLGMDGPYERERTFGSREPKQPQPLLR) is disordered. A compositionally biased stretch (basic and acidic residues) spans 548 to 561 (PYERERTFGSREPK). Residue serine 571 is modified to Phosphoserine. Disordered regions lie at residues 618–695 (DNPG…TLDI) and 717–769 (PTHM…QPLG). At threonine 632 the chain carries Phosphothreonine. 4 positions are modified to phosphoserine: serine 649, serine 660, serine 687, and serine 690. The span at 723-733 (LGSQANGSVSP) shows a compositional bias: polar residues. Serine 735 and serine 776 each carry phosphoserine. Tyrosine 780 is modified (phosphotyrosine). 3 positions are modified to phosphoserine: serine 811, serine 866, and serine 901. 2 disordered regions span residues 859–981 (ALRH…TRKD) and 1076–1127 (GHSS…PHSG). The span at 864–873 (PFSPPEPPLS) shows a compositional bias: pro residues. A compositionally biased stretch (polar residues) spans 914 to 935 (ASSTPSFQQAFASSCTISSNGP). Positions 1099-1109 (PEKKRASEGDR) are enriched in basic and acidic residues. Positions 1110–1127 (SLGSVSPSSSGFSSPHSG) are enriched in low complexity. A phosphoserine mark is found at serine 1149 and serine 1154. An SH2 domain is found at 1172–1282 (WYKADISREQ…ALPCKLLIPE (111 aa)). Serine 1293 and serine 1441 each carry phosphoserine. Residues 1310–1444 (ACNVWYLNSV…SKVMIGSPKK (135 aa)) form the PTB domain.

The protein belongs to the PTEN phosphatase protein family. Interacts with EGFR; EGF promotes the interaction with EGFR. Interacts with PTK2/FAK1 and BCAR1. Tyrosine phosphorylation is critical for these interactions. Interacts with Rho GTPase-activating protein DLC1 and with the regulatory p85 subunit of the PI3K kinase complex; in resting cells, interacts (via C2 tensin-type domain) with DLC1 but, following growth factor stimulation, TNS3 is phosphorylated which leads to weakened interaction with DLC1 and enhanced interaction (via C2 tensin-type domain) with p85 while DLC1 interaction with PTEN increases. Interacts (when phosphorylated on the SH2 domain) with integrins ITGB1, ITGB3 and ITGB5 and with scaffolding protein PEAK1 (phosphorylated on 'Tyr-635'); mediates the association of PEAK1 with ITGB1, ITGB3 and ITGB5. Interacts (via N-terminus) with DOCK5 (via N-terminus); the interaction increases DOCK5 guanine nucleotide exchange activity towards Rac. Interacts with receptor tyrosine kinase MET. Phosphorylated on Ser/Thr and Tyr residues. Phosphorylated on Thr-323 in the C2-type tensin domain following EGF stimulation which changes its binding preference from DLC1 to the p85 regulatory subunit of the PI3K kinase complex. EGF induces tyrosine phosphorylation in a time- and dose-dependent manner. Phosphorylation of the SH2 domain enhances interaction with PEAK1. As to expression, expressed in umbilical vein endothelial cells, epithelial cells, and fibroblasts cells (at protein level). Highly expressed in thyroid, kidney and placenta. Low expression in heart, skeletal muscle, spleen, liver, and lung. Expressed at higher levels in tonsil-derived mesenchymal stem cells (MSCs) than in adipose tissue-derived MSCs or bone marrow-derived MSCs. Expressed in tumor endothelial cells. Expression seems to be down-regulated in thyroid tumor tissues and in anaplastic carcinomas.

It is found in the cell junction. The protein resides in the focal adhesion. It localises to the cell projection. The protein localises to the podosome. In terms of biological role, may act as a protein phosphatase and/or a lipid phosphatase. Involved in the dissociation of the integrin-tensin-actin complex. EGF activates TNS4 and down-regulates TNS3 which results in capping the tail of ITGB1. Increases DOCK5 guanine nucleotide exchange activity towards Rac and plays a role in osteoclast podosome organization. Enhances RHOA activation in the presence of DLC1. Required for growth factor-induced epithelial cell migration; growth factor stimulation induces TNS3 phosphorylation which changes its binding preference from DLC1 to the p85 regulatory subunit of the PI3K kinase complex, displacing PI3K inhibitor PTEN and resulting in translocation of the TNS3-p85 complex to the leading edge of migrating cells to promote RAC1 activation. Meanwhile, PTEN switches binding preference from p85 to DLC1 and the PTEN-DLC1 complex translocates to the posterior of migrating cells to activate RHOA. Acts as an adapter protein by bridging the association of scaffolding protein PEAK1 with integrins ITGB1, ITGB3 and ITGB5 which contributes to the promotion of cell migration. Controls tonsil-derived mesenchymal stem cell proliferation and differentiation by regulating the activity of integrin ITGB1. This is Tensin-3 (TNS3) from Homo sapiens (Human).